The primary structure comprises 200 residues: Probable nicotinate-nucleotide adenylyltransferase (200 aa).

The protein belongs to the NadD family.

The enzyme catalyses nicotinate beta-D-ribonucleotide + ATP + H(+) = deamido-NAD(+) + diphosphate. Its pathway is cofactor biosynthesis; NAD(+) biosynthesis; deamido-NAD(+) from nicotinate D-ribonucleotide: step 1/1. Catalyzes the reversible adenylation of nicotinate mononucleotide (NaMN) to nicotinic acid adenine dinucleotide (NaAD). The protein is Probable nicotinate-nucleotide adenylyltransferase of Leifsonia xyli subsp. xyli (strain CTCB07).